We begin with the raw amino-acid sequence, 108 residues long: Glutaredoxin-1 (108 aa).

Residues 3–106 (EEFVQQRLAN…DILLSIGVLR (104 aa)) form the Glutaredoxin domain. Cys-23 and Cys-26 are oxidised to a cystine.

It belongs to the glutaredoxin family.

It is found in the virion. Its function is as follows. Displays thioltransferase and dehydroascorbate reductase activities. This Cynomys gunnisoni (Gunnison's prairie dog) protein is Glutaredoxin-1 (OPG075).